The following is an 817-amino-acid chain: Exocyst complex component 6 (817 aa).

Coiled-coil stretches lie at residues 87–149 (QSFV…DQIA) and 247–270 (TDAE…EIEV).

It belongs to the SEC15 family. In terms of assembly, the exocyst complex is composed of sec-3/exoc1, sec-5/exoc2, sec-6/exoc3, sec-8/exoc4, sec-10/exoc5, sec-15/exoc6, exo-70/exoc7 and exo-84/exoc8.

In terms of biological role, component of the exocyst complex involved in the docking of exocytic vesicles with fusion sites on the plasma membrane. The sequence is that of Exocyst complex component 6 (sec-15) from Caenorhabditis elegans.